The chain runs to 363 residues: Spermidine/putrescine import ATP-binding protein PotA (363 aa).

The region spanning 4–234 is the ABC transporter domain; sequence LEIRNVTRRF…PRNHFVADFI (231 aa). Residue 36–43 participates in ATP binding; that stretch reads GPSGCGKT.

It belongs to the ABC transporter superfamily. Spermidine/putrescine importer (TC 3.A.1.11.1) family. In terms of assembly, the complex is composed of two ATP-binding proteins (PotA), two transmembrane proteins (PotB and PotC) and a solute-binding protein (PotD).

The protein localises to the cell inner membrane. The enzyme catalyses ATP + H2O + polyamine-[polyamine-binding protein]Side 1 = ADP + phosphate + polyamineSide 2 + [polyamine-binding protein]Side 1.. Its function is as follows. Part of the ABC transporter complex PotABCD involved in spermidine/putrescine import. Responsible for energy coupling to the transport system. The polypeptide is Spermidine/putrescine import ATP-binding protein PotA (Nitrosospira multiformis (strain ATCC 25196 / NCIMB 11849 / C 71)).